We begin with the raw amino-acid sequence, 168 residues long: Coiled-coil domain-containing protein 200 (168 aa).

Residues 16 to 50 (LDRRRWLMAQQQQELQQKEQELKNHQEEEQQSEEK) adopt a coiled-coil conformation. A disordered region spans residues 23 to 168 (MAQQQQELQQ…LKSTNYIQQW (146 aa)). Positions 31-52 (QQKEQELKNHQEEEQQSEEKLQ) are enriched in basic and acidic residues. The span at 70 to 82 (SQEQPQPSQQQPS) shows a compositional bias: low complexity. 2 stretches are compositionally biased toward pro residues: residues 83 to 94 (VQPPSQPPPQPS) and 104 to 117 (GPQPPQPQPPPQPT). Polar residues-rich tracts occupy residues 124–138 (RCTQHTSKCNLQDSQ) and 145–168 (PCQSSPIRNTGYSQLKSTNYIQQW).

This is Coiled-coil domain-containing protein 200 from Homo sapiens (Human).